The sequence spans 424 residues: Neurotensin receptor type 1 (424 aa).

The Extracellular portion of the chain corresponds to 1–67; it reads MHLNSSVQQG…TDIYSKVLVT (67 aa). Asparagine 4, asparagine 38, and asparagine 42 each carry an N-linked (GlcNAc...) asparagine glycan. The helical transmembrane segment at 68–88 threads the bilayer; sequence AVYLALFVVGTVGNSVTAFTL. Topologically, residues 89-102 are cytoplasmic; the sequence is ARKKSLQSLQSTVH. A helical transmembrane segment spans residues 103-122; sequence YHLGSLALSDLLILLLAMPV. Over 123–142 the chain is Extracellular; it reads ELYNFIWVHHPWAFGDAGCR. The cysteines at positions 141 and 224 are disulfide-linked. Residues 143–164 form a helical membrane-spanning segment; the sequence is GYYFLRDACTYATALNVASLSV. At 165-184 the chain is on the cytoplasmic side; that stretch reads ERYLAICHPFKAKTLMSRSR. A helical transmembrane segment spans residues 185–205; that stretch reads TKKFISAIWLASALLAVPMLF. Over 206 to 234 the chain is Extracellular; sequence TMGLQNRSADGQHPGGLVCTPTVDTATVK. Residue asparagine 211 is glycosylated (N-linked (GlcNAc...) asparagine). Residues 235-259 form a helical membrane-spanning segment; sequence VVIQVNTFMSFLFPMLIISILNTVI. Residues 260-308 lie on the Cytoplasmic side of the membrane; sequence ANKLTVMVHQAAEQGRGVCTVGTHNSLEHSTFNMSIEPGRVQALRHGVL. The helical transmembrane segment at 309–330 threads the bilayer; that stretch reads VLRAVVIAFVVCWLPYHVRRLM. Residues 326 to 349 are neurotensin binding; the sequence is VRRLMFCYISDEQWTTFLFDFYHY. Residues 331 to 348 lie on the Extracellular side of the membrane; sequence FCYISDEQWTTFLFDFYH. Residues 349 to 369 traverse the membrane as a helical segment; that stretch reads YFYMLTNALFYVSSAINPILY. Topologically, residues 370–424 are cytoplasmic; sequence NLVSANFRQVFLSTLACLCPGWRRRRKKRPTFSRKPNSMSSNHAFSTSATRETLY. S-palmitoyl cysteine attachment occurs at residues cysteine 386 and cysteine 388. A disordered region spans residues 398 to 424; the sequence is RPTFSRKPNSMSSNHAFSTSATRETLY. Over residues 403-424 the composition is skewed to polar residues; it reads RKPNSMSSNHAFSTSATRETLY.

It belongs to the G-protein coupled receptor 1 family. Neurotensin receptor subfamily. NTSR1 sub-subfamily. As to quaternary structure, interacts (palmitoylated form) with GNA11. In terms of processing, N-glycosylated. Palmitoylated; this is required for normal localization at membrane rafts and normal GNA11-mediated activation of down-stream signaling cascades. The palmitoylation level increases in response to neurotensin treatment.

Its subcellular location is the cell membrane. The protein localises to the membrane raft. Its function is as follows. G-protein coupled receptor for the tridecapeptide neurotensin (NTS). Signaling is effected via G proteins that activate a phosphatidylinositol-calcium second messenger system. Signaling leads to the activation of downstream MAP kinases and protects cells against apoptosis. In Mus musculus (Mouse), this protein is Neurotensin receptor type 1 (Ntsr1).